The primary structure comprises 393 residues: Putative B3 domain-containing protein Os06g0632500 (393 aa).

DNA-binding regions (TF-B3) lie at residues 27–123 (LSVP…FDPG), 141–238 (RPRF…FLQN), and 316–393 (NSFT…VQRR).

The protein localises to the nucleus. The sequence is that of Putative B3 domain-containing protein Os06g0632500 from Oryza sativa subsp. japonica (Rice).